Here is a 372-residue protein sequence, read N- to C-terminus: Queuine tRNA-ribosyltransferase (372 aa).

The active-site Proton acceptor is the Asp89. Substrate-binding positions include 89-93 (DSGGF), Asp143, Gln185, and Gly212. Residues 243–249 (GVGKPED) are RNA binding. The active-site Nucleophile is Asp262. The interval 267-271 (TRNAR) is RNA binding; important for wobble base 34 recognition. Positions 300, 302, 305, and 331 each coordinate Zn(2+).

Belongs to the queuine tRNA-ribosyltransferase family. As to quaternary structure, homodimer. Within each dimer, one monomer is responsible for RNA recognition and catalysis, while the other monomer binds to the replacement base PreQ1. It depends on Zn(2+) as a cofactor.

It carries out the reaction 7-aminomethyl-7-carbaguanine + guanosine(34) in tRNA = 7-aminomethyl-7-carbaguanosine(34) in tRNA + guanine. It participates in tRNA modification; tRNA-queuosine biosynthesis. Catalyzes the base-exchange of a guanine (G) residue with the queuine precursor 7-aminomethyl-7-deazaguanine (PreQ1) at position 34 (anticodon wobble position) in tRNAs with GU(N) anticodons (tRNA-Asp, -Asn, -His and -Tyr). Catalysis occurs through a double-displacement mechanism. The nucleophile active site attacks the C1' of nucleotide 34 to detach the guanine base from the RNA, forming a covalent enzyme-RNA intermediate. The proton acceptor active site deprotonates the incoming PreQ1, allowing a nucleophilic attack on the C1' of the ribose to form the product. After dissociation, two additional enzymatic reactions on the tRNA convert PreQ1 to queuine (Q), resulting in the hypermodified nucleoside queuosine (7-(((4,5-cis-dihydroxy-2-cyclopenten-1-yl)amino)methyl)-7-deazaguanosine). In Pseudomonas aeruginosa (strain LESB58), this protein is Queuine tRNA-ribosyltransferase.